We begin with the raw amino-acid sequence, 491 residues long: Glutamyl-tRNA(Gln) amidotransferase subunit A (491 aa).

Active-site charge relay system residues include Lys79 and Ser158. Ser182 (acyl-ester intermediate) is an active-site residue.

The protein belongs to the amidase family. GatA subfamily. In terms of assembly, heterotrimer of A, B and C subunits.

The catalysed reaction is L-glutamyl-tRNA(Gln) + L-glutamine + ATP + H2O = L-glutaminyl-tRNA(Gln) + L-glutamate + ADP + phosphate + H(+). Functionally, allows the formation of correctly charged Gln-tRNA(Gln) through the transamidation of misacylated Glu-tRNA(Gln) in organisms which lack glutaminyl-tRNA synthetase. The reaction takes place in the presence of glutamine and ATP through an activated gamma-phospho-Glu-tRNA(Gln). This Maricaulis maris (strain MCS10) (Caulobacter maris) protein is Glutamyl-tRNA(Gln) amidotransferase subunit A.